We begin with the raw amino-acid sequence, 177 residues long: Putative pre-16S rRNA nuclease (177 aa).

This sequence belongs to the YqgF nuclease family.

The protein localises to the cytoplasm. Functionally, could be a nuclease involved in processing of the 5'-end of pre-16S rRNA. The chain is Putative pre-16S rRNA nuclease from Psychrobacter arcticus (strain DSM 17307 / VKM B-2377 / 273-4).